Reading from the N-terminus, the 341-residue chain is NADH-ubiquinone oxidoreductase chain 2 (341 aa).

The next 9 membrane-spanning stretches (helical) occupy residues 8 to 28, 60 to 80, 95 to 115, 121 to 141, 146 to 166, 195 to 215, 238 to 258, 273 to 293, and 321 to 341; these read ILFI…NSWL, YFLT…LLML, MIIM…FWFP, LTWM…LMLI, IKYL…IGGL, SIWL…TFMF, FTLF…GFLP, FMLT…LRIC, and MIMT…YFMF.

It belongs to the complex I subunit 2 family.

Its subcellular location is the mitochondrion inner membrane. It carries out the reaction a ubiquinone + NADH + 5 H(+)(in) = a ubiquinol + NAD(+) + 4 H(+)(out). Its function is as follows. Core subunit of the mitochondrial membrane respiratory chain NADH dehydrogenase (Complex I) that is believed to belong to the minimal assembly required for catalysis. Complex I functions in the transfer of electrons from NADH to the respiratory chain. The immediate electron acceptor for the enzyme is believed to be ubiquinone. This chain is NADH-ubiquinone oxidoreductase chain 2 (mt:ND2), found in Drosophila melanogaster (Fruit fly).